Here is a 326-residue protein sequence, read N- to C-terminus: Probable iron chelatin transport system permease protein HP_0889 (326 aa).

10 helical membrane passes run 7–27 (IALACVILAVVVLLFGGESLS), 64–84 (ILALLVGASLSGSGVVMQTIF), 91–111 (PFLLGISSGAMLGVAMAIAVV), 113–133 (SNIAILAFFGAILASLAVLAM), 142–162 (LSLVLSGVVLSAFLSALAGAI), 164–184 (FFVIPQKAQAIVVWLLGSLSL), 187–207 (YKDCLIAFIGLSLGFIPLFLL), 241–261 (VASALAVSVSGTIGWIGLVIP), 275–295 (LLLSSLLMGAFFLLLADVVAK), and 301–321 (DLPVGIATSVLGAPFFLWLLF).

It belongs to the binding-protein-dependent transport system permease family. FecCD subfamily.

The protein resides in the cell inner membrane. Functionally, part of a binding-protein-dependent transport system for an iron chelatin; probably responsible for the translocation of the substrate across the membrane. The chain is Probable iron chelatin transport system permease protein HP_0889 from Helicobacter pylori (strain ATCC 700392 / 26695) (Campylobacter pylori).